The sequence spans 571 residues: Mannan endo-1,4-beta-mannosidase B (571 aa).

Positions 1 to 19 are cleaved as a signal peptide; sequence MNSLSLLLFCIFFVFSTFA. The CBM6 domain occupies 22–141; it reads VYYEAENGKL…WMWVDAFVIN (120 aa). The region spanning 165–459 is the GH26 domain; the sequence is PAAKKLYDFL…FTHKTVMNMD (295 aa). Position 286 (Trp-286) interacts with substrate. Glu-319 functions as the Proton donor in the catalytic mechanism. 2 residues coordinate substrate: Trp-324 and Tyr-379. Glu-407 (nucleophile) is an active-site residue. 2 CBM10 domains span residues 491–527 and 534–571; these read ECFS…CGIG and VCWS…CGII.

Belongs to the glycosyl hydrolase 26 family.

It carries out the reaction Random hydrolysis of (1-&gt;4)-beta-D-mannosidic linkages in mannans, galactomannans and glucomannans.. The chain is Mannan endo-1,4-beta-mannosidase B (MANB) from Piromyces sp.